The sequence spans 125 residues: Egg cell-secreted protein 1.2 (125 aa).

An N-terminal signal peptide occupies residues 1–22 (MASNTSFLFATIAILLVLNISG).

It belongs to the plant egg cell-secreted peptide family. As to expression, restricted to female reproductive tissues, specifically accumulating in storage vesicles of the unfertilized egg cell.

The protein resides in the cytoplasmic vesicle. Its subcellular location is the secreted. Functionally, involved in the regulation of gamete interactions during the double fertilization and to prevent multiple-pollen tube attraction; mediates the redistribution of the gamete fusogen HAP2/GCS1 to the cell surface after secretion upon sperm arrival. This is Egg cell-secreted protein 1.2 (EC1.2) from Arabidopsis thaliana (Mouse-ear cress).